A 496-amino-acid polypeptide reads, in one-letter code: Chaperone SurA (496 aa).

Residues 1–42 (MACKSTAVRSATRVAPTRRLGMVTGALVALMAGAALLPAAHA) form the signal peptide. The disordered stretch occupies residues 53 to 80 (RGIFTTPDASPSQPLLRGTLPGPSTASG). PpiC domains lie at 235–337 (VQEY…KLVD) and 349–447 (VAQT…QVEG).

The protein resides in the periplasm. It catalyses the reaction [protein]-peptidylproline (omega=180) = [protein]-peptidylproline (omega=0). Chaperone involved in the correct folding and assembly of outer membrane proteins. Recognizes specific patterns of aromatic residues and the orientation of their side chains, which are found more frequently in integral outer membrane proteins. May act in both early periplasmic and late outer membrane-associated steps of protein maturation. In Ralstonia nicotianae (strain ATCC BAA-1114 / GMI1000) (Ralstonia solanacearum), this protein is Chaperone SurA.